We begin with the raw amino-acid sequence, 653 residues long: MAAEMDWDKTVGAAEDVRRIFEHIPAILVGLEGPDHRFVAVNAAYRGFSPLLDTVGQPAREVYPELEGQQIYEMLDRVYQTGEPQSGSEWRLQTDYDGSGVEERYFDFVVTPRRRADGSIEGVQLIVDDVTSRVRARQAAEARVEELSERYRNVRDSATVMQQALLAASVPVVPGADIAAEYLVAAEDTAAGGDWFDALALGDRLVLVVGDVVGHGVEAAAVMSQLRTALRMQISAGYTVVEALEAVDRFHKQVPGSKSATMCVGSLDFTSGEFQYCTAGHPPPLLVTADASARYVEPTGAGPLGSGTGFPVRSEVLNIGDAILFYTDGLIERPGRPLEASTAEFADLAASIASGSGGFVLDAPARPIDRLCSDTLELLLRSTGYNDDVTLLAMQRRAPTPPLHITLDATINAARTVRAQLREWLAEIGADHSDIADIVHAISEFVENAVEHGYATDVSKGIVVAAALAGDGNVRASVIDRGQWKDHRDGARGRGRGLAMAEALVSEARIMHGAGGTTATLTHRLSRPARFVTDTMVRRAAFQQTIDSEFVSLVESGRIVVRGDVDSTTAATLDRQIAVESRSGIAPVTIDLSAVTHLGSAGVGALAAACDRARKQGTECVLVAPPGSPAHHVLSLVQLPVVGADTEDIFAQE.

A phosphothreonine; by PknD mark is found at Thr-54 and Thr-81. Residues 86–142 (SGSEWRLQTDYDGSGVEERYFDFVVTPRRRADGSIEGVQLIVDDVTSRVRARQAAEA) enclose the PAC domain. A PPM-type phosphatase domain is found at 177-396 (DIAAEYLVAA…DDVTLLAMQR (220 aa)). Residues Asp-211 and Val-212 each contribute to the Mn(2+) site. Thr-299 is modified (phosphothreonine; by PknD). Mn(2+) contacts are provided by Asp-328 and Asp-387. Phosphothreonine; by PknD is present on Thr-390. The interval 397-544 (RAPTPPLHIT…TMVRRAAFQQ (148 aa)) is anti-sigma factor kinase region. Ser-506 is subject to Phosphoserine; by PknD. Phosphothreonine; by PknD is present on residues Thr-520 and Thr-568. Residues 546–653 (IDSEFVSLVE…ADTEDIFAQE (108 aa)) form the STAS domain. At Ser-600 the chain carries Phosphoserine; by autocatalysis.

In terms of assembly, exists in solution as both monomer and dimer. Both the phosphorylated and unphosphorylated proteins form extended dimers. Interacts with SigF. Can efficiently bind to SigF independently of its autophosphorylation. Interaction between SigF and Rv1364c is reduced significantly upon the phosphorylation of both proteins by PknD. The cofactor is Mn(2+). It depends on Mg(2+) as a cofactor. Autophosphorylated. Phosphorylated by PknD on multiple threonine and serine residues. Phosphorylation is antagonized by the phosphatase activity.

It catalyses the reaction O-phospho-L-seryl-[protein] + H2O = L-seryl-[protein] + phosphate. It carries out the reaction O-phospho-L-threonyl-[protein] + H2O = L-threonyl-[protein] + phosphate. The enzyme catalyses L-seryl-[protein] + ATP = O-phospho-L-seryl-[protein] + ADP + H(+). The catalysed reaction is L-threonyl-[protein] + ATP = O-phospho-L-threonyl-[protein] + ADP + H(+). Its activity is regulated as follows. The phosphatase domain is activated by the anti-sigma factor kinase domain. Its function is as follows. Primarily acts as an independent SigF regulator that is sensitive to the osmosensory signal, mediating the cross talk of PknD with the SigF regulon. Possesses both phosphatase and kinase activities. The kinase domain functions as a classic anti-sigma factor-like kinase to phosphorylate the anti-anti-sigma factor domain at the canonical regulatory site, and the phosphatase domain antagonizes this activity. This chain is Multidomain regulatory protein Rv1364c, found in Mycobacterium tuberculosis (strain ATCC 25618 / H37Rv).